We begin with the raw amino-acid sequence, 274 residues long: 2,3,4,5-tetrahydropyridine-2,6-dicarboxylate N-succinyltransferase (274 aa).

Residues Arg-106 and Asp-143 each contribute to the substrate site.

This sequence belongs to the transferase hexapeptide repeat family. Homotrimer.

Its subcellular location is the cytoplasm. The enzyme catalyses (S)-2,3,4,5-tetrahydrodipicolinate + succinyl-CoA + H2O = (S)-2-succinylamino-6-oxoheptanedioate + CoA. It functions in the pathway amino-acid biosynthesis; L-lysine biosynthesis via DAP pathway; LL-2,6-diaminopimelate from (S)-tetrahydrodipicolinate (succinylase route): step 1/3. In Rickettsia prowazekii (strain Madrid E), this protein is 2,3,4,5-tetrahydropyridine-2,6-dicarboxylate N-succinyltransferase.